Consider the following 30-residue polypeptide: Cycloviolacin-H1 (30 aa).

The cyclopeptide (Gly-Asn) cross-link spans 1-30; that stretch reads GIPCGESCVYIPCLTSAIGCSCKSKVCYRN. 3 disulfide bridges follow: cysteine 4-cysteine 20, cysteine 8-cysteine 22, and cysteine 13-cysteine 27.

It belongs to the cyclotide family. Bracelet subfamily. Post-translationally, this is a cyclic peptide.

In terms of biological role, probably participates in a plant defense mechanism. The sequence is that of Cycloviolacin-H1 from Viola hederacea (Australian violet).